Reading from the N-terminus, the 357-residue chain is Peptide chain release factor 1 (357 aa).

At glutamine 234 the chain carries N5-methylglutamine. Over residues 284–307 (KKQEQRSNDRKQQVGSGDRSERIR) the composition is skewed to basic and acidic residues. The interval 284-313 (KKQEQRSNDRKQQVGSGDRSERIRTYNFPQ) is disordered.

Belongs to the prokaryotic/mitochondrial release factor family. Post-translationally, methylated by PrmC. Methylation increases the termination efficiency of RF1.

The protein localises to the cytoplasm. Its function is as follows. Peptide chain release factor 1 directs the termination of translation in response to the peptide chain termination codons UAG and UAA. The sequence is that of Peptide chain release factor 1 from Borrelia hermsii (strain HS1 / DAH).